Here is a 129-residue protein sequence, read N- to C-terminus: Small ribosomal subunit protein uS11 (129 aa).

The protein belongs to the universal ribosomal protein uS11 family. Part of the 30S ribosomal subunit. Interacts with proteins S7 and S18. Binds to IF-3.

Functionally, located on the platform of the 30S subunit, it bridges several disparate RNA helices of the 16S rRNA. Forms part of the Shine-Dalgarno cleft in the 70S ribosome. The polypeptide is Small ribosomal subunit protein uS11 (Desulforamulus reducens (strain ATCC BAA-1160 / DSM 100696 / MI-1) (Desulfotomaculum reducens)).